The sequence spans 151 residues: Large ribosomal subunit protein eL19 (151 aa).

Residues 62-93 are disordered; the sequence is RLKERRKKRSLKSEGKKSGSRKGKKGARANSK. Residues 79–88 are compositionally biased toward basic residues; that stretch reads SGSRKGKKGA.

It belongs to the eukaryotic ribosomal protein eL19 family. In terms of assembly, part of the 50S ribosomal subunit.

Functionally, binds to the 23S rRNA. This chain is Large ribosomal subunit protein eL19, found in Saccharolobus solfataricus (strain ATCC 35092 / DSM 1617 / JCM 11322 / P2) (Sulfolobus solfataricus).